The chain runs to 231 residues: tRNA (guanine-N(1)-)-methyltransferase (231 aa).

S-adenosyl-L-methionine is bound at residue G112.

Belongs to the RNA methyltransferase TrmD family. In terms of assembly, homodimer.

It localises to the cytoplasm. It catalyses the reaction guanosine(37) in tRNA + S-adenosyl-L-methionine = N(1)-methylguanosine(37) in tRNA + S-adenosyl-L-homocysteine + H(+). Functionally, specifically methylates guanosine-37 in various tRNAs. This chain is tRNA (guanine-N(1)-)-methyltransferase, found in Chlorobium chlorochromatii (strain CaD3).